Reading from the N-terminus, the 137-residue chain is Putative FERT-1 protein (137 aa).

This Ascaris suum (Pig roundworm) protein is Putative FERT-1 protein (FERT-1).